Here is a 311-residue protein sequence, read N- to C-terminus: 5'-adenylylsulfate reductase-like 3 (311 aa).

An N-terminal signal peptide occupies residues 1–22 (MATRLLCWTALLLPIIAATAAA). The Thioredoxin domain maps to 23–164 (SPLPEACPVP…LAAFYRDVSG (142 aa)). Residue Asn-139 is glycosylated (N-linked (GlcNAc...) asparagine). The helical transmembrane segment at 210–230 (LALATAFVILRLLYLLFPKIG) threads the bilayer. N-linked (GlcNAc...) asparagine glycosylation is found at Asn-281 and Asn-305.

Its subcellular location is the membrane. The sequence is that of 5'-adenylylsulfate reductase-like 3 (APRL3) from Oryza sativa subsp. japonica (Rice).